A 336-amino-acid chain; its full sequence is Protein-arginine kinase (336 aa).

Residues 22–245 (IVMSSRIRLA…QQIINEEMQI (224 aa)) enclose the Phosphagen kinase C-terminal domain. ATP contacts are provided by residues 25–29 (SSRIR), His83, Arg116, 167–171 (RASVM), and 198–203 (RGIYGE).

This sequence belongs to the ATP:guanido phosphotransferase family.

It carries out the reaction L-arginyl-[protein] + ATP = N(omega)-phospho-L-arginyl-[protein] + ADP + H(+). Its function is as follows. Catalyzes the specific phosphorylation of arginine residues in proteins. The sequence is that of Protein-arginine kinase from Staphylococcus saprophyticus subsp. saprophyticus (strain ATCC 15305 / DSM 20229 / NCIMB 8711 / NCTC 7292 / S-41).